We begin with the raw amino-acid sequence, 286 residues long: NAD kinase (286 aa).

The active-site Proton acceptor is the Asp-74. NAD(+) is bound by residues 74-75 (DG), 148-149 (ND), Asp-178, Ala-186, 189-194 (TAYNLS), and Gln-244.

It belongs to the NAD kinase family. A divalent metal cation is required as a cofactor.

It is found in the cytoplasm. The catalysed reaction is NAD(+) + ATP = ADP + NADP(+) + H(+). Involved in the regulation of the intracellular balance of NAD and NADP, and is a key enzyme in the biosynthesis of NADP. Catalyzes specifically the phosphorylation on 2'-hydroxyl of the adenosine moiety of NAD to yield NADP. The sequence is that of NAD kinase from Campylobacter jejuni (strain RM1221).